Here is a 267-residue protein sequence, read N- to C-terminus: Potassium channel regulatory protein (267 aa).

Positions 5 to 74 (ELVTLNVGGK…LRTQQLLLPT (70 aa)) constitute a BTB domain.

Can form homooligomers. Interacts with KCNA1 (via cytoplasmic N-terminal domain) and KCNA4.

It localises to the endoplasmic reticulum. Its function is as follows. Inhibits potassium fluxes in cells. May regulate Kv1 family channel proteins by retaining a fraction of channels in endomembranes. The protein is Potassium channel regulatory protein (KCNRG) of Bos taurus (Bovine).